The primary structure comprises 306 residues: D-alanine--D-alanine ligase (306 aa).

Residues 101-300 (RIMLAAAGVP…FGELVTWMVE (200 aa)) enclose the ATP-grasp domain. 128 to 182 (MPTPYVLKPNAGGSSVGVFIVREDQAHPPQELTREDWPHGENLLAEEFIPGLELT) serves as a coordination point for ATP. Aspartate 250, glutamate 267, and asparagine 269 together coordinate Mg(2+).

This sequence belongs to the D-alanine--D-alanine ligase family. The cofactor is Mg(2+). Mn(2+) is required as a cofactor.

Its subcellular location is the cytoplasm. It catalyses the reaction 2 D-alanine + ATP = D-alanyl-D-alanine + ADP + phosphate + H(+). The protein operates within cell wall biogenesis; peptidoglycan biosynthesis. Functionally, cell wall formation. The chain is D-alanine--D-alanine ligase from Xanthobacter autotrophicus (strain ATCC BAA-1158 / Py2).